Consider the following 250-residue polypeptide: Probable transcriptional regulatory protein Cphamn1_0542 (250 aa).

This sequence belongs to the TACO1 family.

The protein resides in the cytoplasm. The sequence is that of Probable transcriptional regulatory protein Cphamn1_0542 from Chlorobium phaeobacteroides (strain BS1).